The primary structure comprises 508 residues: MGLPWYRVHTVVLNDPARLLSVHIMHTALVAGWAGSMALYELAVFDPSDPVLDPMWRQGMFVIPFMTRLGITNSWGGWNITGGTITNPGLWSYEGVAGAHIVFSGLCFLAAIWHWVYWDLEIFCDERTGKPSLDLPKIFGIHLFLSGVACFGFGAFHVTGLYGPGIWVSDPYGLTGKVQTVNPTWGVEGFDPFVPGGIASHHIAAGTLGILAGLFHLSVRPPQRLYKGLRMGNIETVLSSSIAAVFFAAFVVAGTMWYGSATTPIELFGPTRYQWDQGYFQQEIYRRVSAGLAENQSVSEAWSKIPEKLAFYDYIGNNPAKGGLFRAGSMDNGDGIAVGWLGHPVFRNKEGRELFVRRMPTFFDTFPVVLVYGFGIVRADVPFRRAESKYSVEQVGVTVEFYGGELNGVSYSDPATVKKYAIRAQLGEIFELDPATLKSYGVFRSSPRGWFTFGHASFALLFFFGHIWHGSRTLFRDVFAGIDPDLDAQVEFGAFQKLGDPTTKRQAV.

Helical transmembrane passes span 21–36 (SVHI…WAGS), 101–115 (IVFS…IWHW), 140–156 (GIHL…FGAF), 203–218 (IAAG…FHLS), 237–252 (VLSS…AFVV), and 457–472 (SFAL…HGSR).

The protein belongs to the PsbB/PsbC family. PsbB subfamily. In terms of assembly, PSII is composed of 1 copy each of membrane proteins PsbA, PsbB, PsbC, PsbD, PsbE, PsbF, PsbH, PsbI, PsbJ, PsbK, PsbL, PsbM, PsbT, PsbX, PsbY, PsbZ, Psb30/Ycf12, at least 3 peripheral proteins of the oxygen-evolving complex and a large number of cofactors. It forms dimeric complexes. Binds multiple chlorophylls. PSII binds additional chlorophylls, carotenoids and specific lipids. is required as a cofactor.

It is found in the plastid. Its subcellular location is the chloroplast thylakoid membrane. One of the components of the core complex of photosystem II (PSII). It binds chlorophyll and helps catalyze the primary light-induced photochemical processes of PSII. PSII is a light-driven water:plastoquinone oxidoreductase, using light energy to abstract electrons from H(2)O, generating O(2) and a proton gradient subsequently used for ATP formation. This chain is Photosystem II CP47 reaction center protein, found in Draba nemorosa (Woodland whitlowgrass).